The sequence spans 205 residues: dTTP/UTP pyrophosphatase (205 aa).

The Proton acceptor role is filled by Asp71.

The protein belongs to the Maf family. YhdE subfamily. The cofactor is a divalent metal cation.

It is found in the cytoplasm. It carries out the reaction dTTP + H2O = dTMP + diphosphate + H(+). The enzyme catalyses UTP + H2O = UMP + diphosphate + H(+). Nucleoside triphosphate pyrophosphatase that hydrolyzes dTTP and UTP. May have a dual role in cell division arrest and in preventing the incorporation of modified nucleotides into cellular nucleic acids. In Syntrophus aciditrophicus (strain SB), this protein is dTTP/UTP pyrophosphatase.